A 226-amino-acid chain; its full sequence is Cytidylate kinase (226 aa).

12-20 (GPSGAGKGT) lines the ATP pocket.

The protein belongs to the cytidylate kinase family. Type 1 subfamily.

The protein localises to the cytoplasm. The enzyme catalyses CMP + ATP = CDP + ADP. It carries out the reaction dCMP + ATP = dCDP + ADP. This Vibrio parahaemolyticus serotype O3:K6 (strain RIMD 2210633) protein is Cytidylate kinase.